A 225-amino-acid polypeptide reads, in one-letter code: DNA-binding response regulator MtrA (225 aa).

Residues 4–117 (RILVVDDDAS…ELVARVRARL (114 aa)) enclose the Response regulatory domain. Aspartate 53 is subject to 4-aspartylphosphate. A DNA-binding region (ompR/PhoB-type) is located at residues 125–224 (AEMLSIADVE…VRGVGYKAGP (100 aa)).

In terms of processing, phosphorylated by MtrB.

In terms of biological role, member of the two-component regulatory system MtrA/MtrB. This Mycolicibacterium paratuberculosis (strain ATCC BAA-968 / K-10) (Mycobacterium paratuberculosis) protein is DNA-binding response regulator MtrA (mtrA).